The following is a 543-amino-acid chain: CTP synthase (543 aa).

Residues 1 to 265 form an amidoligase domain region; that stretch reads MARYIFITGG…DDEVLAAFGI (265 aa). Ser-13 contributes to the CTP binding site. Position 13 (Ser-13) interacts with UTP. An ATP-binding site is contributed by 14 to 19; that stretch reads SLGKGL. Residue Tyr-54 participates in L-glutamine binding. Asp-71 contacts ATP. The Mg(2+) site is built by Asp-71 and Glu-139. Residues 146–148, 186–191, and Lys-222 contribute to the CTP site; these read DIE and KTKPTQ. UTP is bound by residues 186–191 and Lys-222; that span reads KTKPTQ. 238-240 is a binding site for ATP; it reads RDV. The 252-residue stretch at 291 to 542 folds into the Glutamine amidotransferase type-1 domain; that stretch reads TIAIVGKYTG…IQAAMVQSRL (252 aa). Gly-353 lines the L-glutamine pocket. Cys-380 (nucleophile; for glutamine hydrolysis) is an active-site residue. L-glutamine is bound by residues 381–384, Glu-404, and Arg-470; that span reads FGMQ. Residues His-515 and Glu-517 contribute to the active site.

This sequence belongs to the CTP synthase family. In terms of assembly, homotetramer.

It carries out the reaction UTP + L-glutamine + ATP + H2O = CTP + L-glutamate + ADP + phosphate + 2 H(+). The enzyme catalyses L-glutamine + H2O = L-glutamate + NH4(+). The catalysed reaction is UTP + NH4(+) + ATP = CTP + ADP + phosphate + 2 H(+). It functions in the pathway pyrimidine metabolism; CTP biosynthesis via de novo pathway; CTP from UDP: step 2/2. Its activity is regulated as follows. Allosterically activated by GTP, when glutamine is the substrate; GTP has no effect on the reaction when ammonia is the substrate. The allosteric effector GTP functions by stabilizing the protein conformation that binds the tetrahedral intermediate(s) formed during glutamine hydrolysis. Inhibited by the product CTP, via allosteric rather than competitive inhibition. Functionally, catalyzes the ATP-dependent amination of UTP to CTP with either L-glutamine or ammonia as the source of nitrogen. Regulates intracellular CTP levels through interactions with the four ribonucleotide triphosphates. This Bradyrhizobium diazoefficiens (strain JCM 10833 / BCRC 13528 / IAM 13628 / NBRC 14792 / USDA 110) protein is CTP synthase.